The following is a 2157-amino-acid chain: Genome polyprotein (2157 aa).

G2 carries the N-myristoyl glycine; by host lipid modification. Over 2-1470 (GAQVSRQNVG…DLSIANSIIT (1469 aa)) the chain is Cytoplasmic. Residues 567-584 (PIEQNPVENYIDEVLNEV) are amphipathic alpha-helix. Catalysis depends on for protease 2A activity residues H875 and D892. Positions 909 and 911 each coordinate Zn(2+). The active-site For protease 2A activity is C963. Residues C969 and H971 each coordinate Zn(2+). Residues 1095-1164 (SDSWLKKFTE…NLRAADNATQ (70 aa)) form a membrane-binding region. An oligomerization region spans residues 1095–1228 (SDSWLKKFTE…PPGTGKSITT (134 aa)). An RNA-binding region spans residues 1116-1120 (GNKIS). An SF3 helicase domain is found at 1188-1350 (EAKRIKVLYN…YKDAQGKLNV (163 aa)). Zn(2+)-binding residues include C1357, C1368, and C1373. A C4-type; degenerate zinc finger spans residues 1357–1373 (CNVNTKIGNAKCCPFVC). Residues 1400–1407 (EDKRRRQV) are RNA-binding. The segment at 1411-1416 (MSAIFQ) is oligomerization. The stretch at 1471-1486 (IIANIISIAGIIFVIY) is an intramembrane region. Residues 1487-2157 (KLFCTLQGPY…LLKHEWYEKF (671 aa)) are Cytoplasmic-facing. An O-(5'-phospho-RNA)-tyrosine modification is found at Y1496. The Peptidase C3 domain occupies 1515-1693 (GPEEEFGRSI…FSAMLLRSYF (179 aa)). Residues H1554, E1585, and C1661 each act as for protease 3C activity in the active site. A RdRp catalytic domain is found at 1925 to 2038 (DCIMAFDYTN…SYKYTLDMEA (114 aa)). 2 residues coordinate Mg(2+): D1931 and D2024.

Belongs to the picornaviruses polyprotein family. Interacts with capsid protein VP1 and capsid protein VP3 to form heterotrimeric protomers. In terms of assembly, interacts with capsid protein VP0, and capsid protein VP3 to form heterotrimeric protomers. Five protomers subsequently associate to form pentamers which serve as building blocks for the capsid. Interacts with capsid protein VP2, capsid protein VP3 and capsid protein VP4 following cleavage of capsid protein VP0. As to quaternary structure, interacts with capsid protein VP1 and capsid protein VP3 in the mature capsid. Interacts with capsid protein VP0 and capsid protein VP1 to form heterotrimeric protomers. Five protomers subsequently associate to form pentamers which serve as building blocks for the capsid. Interacts with capsid protein VP4 in the mature capsid. Interacts with protein 2C; this interaction may be important for virion morphogenesis. In terms of assembly, interacts with capsid protein VP1 and capsid protein VP3. As to quaternary structure, homodimer. Homohexamer; forms a hexameric ring structure with 6-fold symmetry characteristic of AAA+ ATPases. Interacts (via N-terminus) with host RTN3 (via reticulon domain); this interaction is important for viral replication. Interacts with capsid protein VP3; this interaction may be important for virion morphogenesis. In terms of assembly, interacts with protein 3CD. As to quaternary structure, homodimer. Interacts with host GBF1. Interacts (via GOLD domain) with host ACBD3 (via GOLD domain); this interaction allows the formation of a viral protein 3A/ACBD3 heterotetramer with a 2:2 stoichiometry, which will stimulate the recruitment of host PI4KB in order to synthesize PI4P at the viral RNA replication sites. Interacts with RNA-directed RNA polymerase. In terms of assembly, interacts with protein 3AB and with RNA-directed RNA polymerase. As to quaternary structure, interacts with Viral protein genome-linked and with protein 3CD. The cofactor is Mg(2+). Specific enzymatic cleavages in vivo by the viral proteases yield processing intermediates and the mature proteins. In terms of processing, myristoylation is required for the formation of pentamers during virus assembly. Further assembly of 12 pentamers and a molecule of genomic RNA generates the provirion. Post-translationally, during virion maturation, immature virions are rendered infectious following cleavage of VP0 into VP4 and VP2. This maturation seems to be an autocatalytic event triggered by the presence of RNA in the capsid and it is followed by a conformational change infectious virion. Myristoylation is required during RNA encapsidation and formation of the mature virus particle. In terms of processing, VPg is uridylylated by the polymerase into VPg-pUpU. This acts as a nucleotide-peptide primer for the genomic RNA replication.

The protein resides in the virion. It localises to the host cytoplasm. It is found in the host cytoplasmic vesicle membrane. Its subcellular location is the host nucleus. It carries out the reaction a ribonucleoside 5'-triphosphate + H2O = a ribonucleoside 5'-diphosphate + phosphate + H(+). The enzyme catalyses Selective cleavage of Tyr-|-Gly bond in the picornavirus polyprotein.. The catalysed reaction is RNA(n) + a ribonucleoside 5'-triphosphate = RNA(n+1) + diphosphate. It catalyses the reaction Selective cleavage of Gln-|-Gly bond in the poliovirus polyprotein. In other picornavirus reactions Glu may be substituted for Gln, and Ser or Thr for Gly.. With respect to regulation, replication or transcription is subject to high level of random mutations by the nucleotide analog ribavirin. Its function is as follows. Forms an icosahedral capsid of pseudo T=3 symmetry with capsid proteins VP2 and VP3. The capsid is 300 Angstroms in diameter, composed of 60 copies of each capsid protein and enclosing the viral positive strand RNA genome. Capsid protein VP1 mainly forms the vertices of the capsid. Capsid protein VP1 interacts with host cell receptor to provide virion attachment to target host cells. This attachment induces virion internalization. Tyrosine kinases are probably involved in the entry process. After binding to its receptor, the capsid undergoes conformational changes. Capsid protein VP1 N-terminus (that contains an amphipathic alpha-helix) and capsid protein VP4 are externalized. Together, they shape a pore in the host membrane through which viral genome is translocated to host cell cytoplasm. In terms of biological role, forms an icosahedral capsid of pseudo T=3 symmetry with capsid proteins VP2 and VP3. The capsid is 300 Angstroms in diameter, composed of 60 copies of each capsid protein and enclosing the viral positive strand RNA genome. Functionally, lies on the inner surface of the capsid shell. After binding to the host receptor, the capsid undergoes conformational changes. Capsid protein VP4 is released, Capsid protein VP1 N-terminus is externalized, and together, they shape a pore in the host membrane through which the viral genome is translocated into the host cell cytoplasm. Component of immature procapsids, which is cleaved into capsid proteins VP4 and VP2 after maturation. Allows the capsid to remain inactive before the maturation step. Its function is as follows. Cysteine protease that cleaves viral polyprotein and specific host proteins. It is responsible for the autocatalytic cleavage between the P1 and P2 regions, which is the first cleavage occurring in the polyprotein. Also cleaves the host translation initiation factor EIF4G1, in order to shut down the capped cellular mRNA translation. Inhibits the host nucleus-cytoplasm protein and RNA trafficking by cleaving host members of the nuclear pores. Counteracts stress granule formation probably by antagonizing its assembly or promoting its dissassembly. In terms of biological role, plays an essential role in the virus replication cycle by acting as a viroporin. Creates a pore in the host endoplasmic reticulum and as a consequence releases Ca2+ in the cytoplasm of infected cell. In turn, high levels of cytoplasmic calcium may trigger membrane trafficking and transport of viral ER-associated proteins to viroplasms, sites of viral genome replication. Functionally, induces and associates with structural rearrangements of intracellular membranes. Displays RNA-binding, nucleotide binding and NTPase activities. May play a role in virion morphogenesis and viral RNA encapsidation by interacting with the capsid protein VP3. Localizes the viral replication complex to the surface of membranous vesicles. Together with protein 3CD binds the Cis-Active RNA Element (CRE) which is involved in RNA synthesis initiation. Acts as a cofactor to stimulate the activity of 3D polymerase, maybe through a nucleid acid chaperone activity. Its function is as follows. Localizes the viral replication complex to the surface of membranous vesicles. It inhibits host cell endoplasmic reticulum-to-Golgi apparatus transport and causes the disassembly of the Golgi complex, possibly through GBF1 interaction. This would result in depletion of MHC, trail receptors and IFN receptors at the host cell surface. Plays an essential role in viral RNA replication by recruiting ACBD3 and PI4KB at the viral replication sites, thereby allowing the formation of the rearranged membranous structures where viral replication takes place. In terms of biological role, acts as a primer for viral RNA replication and remains covalently bound to viral genomic RNA. VPg is uridylylated prior to priming replication into VPg-pUpU. The oriI viral genomic sequence may act as a template for this. The VPg-pUpU is then used as primer on the genomic RNA poly(A) by the RNA-dependent RNA polymerase to replicate the viral genome. During genome replication, the VPg-RNA linkage is removed by the host TDP2, thereby accelerating replication. During the late stage of the replication cycle, host TDP2 is excluded from sites of viral RNA synthesis and encapsidation, allowing for the generation of progeny virions. Functionally, involved in the viral replication complex and viral polypeptide maturation. It exhibits protease activity with a specificity and catalytic efficiency that is different from protease 3C. Protein 3CD lacks polymerase activity. Protein 3CD binds to the 5'UTR of the viral genome. Replicates the viral genomic RNA on the surface of intracellular membranes. May form linear arrays of subunits that propagate along a strong head-to-tail interaction called interface-I. Covalently attaches UMP to a tyrosine of VPg, which is used to prime RNA synthesis. The positive stranded RNA genome is first replicated at virus induced membranous vesicles, creating a dsRNA genomic replication form. This dsRNA is then used as template to synthesize positive stranded RNA genomes. ss(+)RNA genomes are either translated, replicated or encapsidated. Its function is as follows. Major viral protease that mediates proteolytic processing of the polyprotein. Cleaves host EIF5B, contributing to host translation shutoff. Also cleaves host PABPC1, contributing to host translation shutoff. Cleaves host NLRP1, triggers host N-glycine-mediated degradation of the autoinhibitory NLRP1 N-terminal fragment. The sequence is that of Genome polyprotein from Homo sapiens (Human).